We begin with the raw amino-acid sequence, 383 residues long: Chaperone protein DnaJ (383 aa).

One can recognise a J domain in the interval 5 to 70 (DYYEVLGVAK…EKRAAYDRFG (66 aa)). The CR-type zinc-finger motif lies at 139 to 217 (GKTETIRIPT…CSGAGRVNRE (79 aa)). Positions 152, 155, 169, 172, 191, 194, 205, and 208 each coordinate Zn(2+). CXXCXGXG motif repeat units lie at residues 152–159 (CEACSGTG), 169–176 (CSTCGGYG), 191–198 (CPNCHGRG), and 205–212 (CTACSGAG).

The protein belongs to the DnaJ family. Homodimer. It depends on Zn(2+) as a cofactor.

The protein localises to the cytoplasm. Functionally, participates actively in the response to hyperosmotic and heat shock by preventing the aggregation of stress-denatured proteins and by disaggregating proteins, also in an autonomous, DnaK-independent fashion. Unfolded proteins bind initially to DnaJ; upon interaction with the DnaJ-bound protein, DnaK hydrolyzes its bound ATP, resulting in the formation of a stable complex. GrpE releases ADP from DnaK; ATP binding to DnaK triggers the release of the substrate protein, thus completing the reaction cycle. Several rounds of ATP-dependent interactions between DnaJ, DnaK and GrpE are required for fully efficient folding. Also involved, together with DnaK and GrpE, in the DNA replication of plasmids through activation of initiation proteins. This Methylorubrum populi (strain ATCC BAA-705 / NCIMB 13946 / BJ001) (Methylobacterium populi) protein is Chaperone protein DnaJ.